The following is a 54-amino-acid chain: Sec-independent protein translocase protein TatA (54 aa).

A helical membrane pass occupies residues 1–21 (MGMSFSHLLIVLLIIFVLFGA).

It belongs to the TatA/E family. As to quaternary structure, the Tat system comprises two distinct complexes: a TatABC complex, containing multiple copies of TatA, TatB and TatC subunits, and a separate TatA complex, containing only TatA subunits. Substrates initially bind to the TatABC complex, which probably triggers association of the separate TatA complex to form the active translocon.

The protein localises to the cell inner membrane. Part of the twin-arginine translocation (Tat) system that transports large folded proteins containing a characteristic twin-arginine motif in their signal peptide across membranes. TatA could form the protein-conducting channel of the Tat system. This Rickettsia prowazekii (strain Madrid E) protein is Sec-independent protein translocase protein TatA.